Here is a 106-residue protein sequence, read N- to C-terminus: UPF0145 protein PSEEN3024 (106 aa).

The protein belongs to the UPF0145 family.

This chain is UPF0145 protein PSEEN3024, found in Pseudomonas entomophila (strain L48).